Reading from the N-terminus, the 252-residue chain is Imidazole glycerol phosphate synthase subunit HisF (252 aa).

Residues Asp-11 and Asp-130 contribute to the active site.

Belongs to the HisA/HisF family. In terms of assembly, heterodimer of HisH and HisF.

It is found in the cytoplasm. The enzyme catalyses 5-[(5-phospho-1-deoxy-D-ribulos-1-ylimino)methylamino]-1-(5-phospho-beta-D-ribosyl)imidazole-4-carboxamide + L-glutamine = D-erythro-1-(imidazol-4-yl)glycerol 3-phosphate + 5-amino-1-(5-phospho-beta-D-ribosyl)imidazole-4-carboxamide + L-glutamate + H(+). It functions in the pathway amino-acid biosynthesis; L-histidine biosynthesis; L-histidine from 5-phospho-alpha-D-ribose 1-diphosphate: step 5/9. Its function is as follows. IGPS catalyzes the conversion of PRFAR and glutamine to IGP, AICAR and glutamate. The HisF subunit catalyzes the cyclization activity that produces IGP and AICAR from PRFAR using the ammonia provided by the HisH subunit. The polypeptide is Imidazole glycerol phosphate synthase subunit HisF (Geobacillus thermodenitrificans (strain NG80-2)).